The sequence spans 367 residues: UDP-N-acetylglucosamine--N-acetylmuramyl-(pentapeptide) pyrophosphoryl-undecaprenol N-acetylglucosamine transferase (367 aa).

UDP-N-acetyl-alpha-D-glucosamine is bound by residues 15–17 (TGG), asparagine 127, arginine 163, serine 191, isoleucine 249, and glutamine 294.

Belongs to the glycosyltransferase 28 family. MurG subfamily.

Its subcellular location is the cell inner membrane. The catalysed reaction is di-trans,octa-cis-undecaprenyl diphospho-N-acetyl-alpha-D-muramoyl-L-alanyl-D-glutamyl-meso-2,6-diaminopimeloyl-D-alanyl-D-alanine + UDP-N-acetyl-alpha-D-glucosamine = di-trans,octa-cis-undecaprenyl diphospho-[N-acetyl-alpha-D-glucosaminyl-(1-&gt;4)]-N-acetyl-alpha-D-muramoyl-L-alanyl-D-glutamyl-meso-2,6-diaminopimeloyl-D-alanyl-D-alanine + UDP + H(+). It participates in cell wall biogenesis; peptidoglycan biosynthesis. Functionally, cell wall formation. Catalyzes the transfer of a GlcNAc subunit on undecaprenyl-pyrophosphoryl-MurNAc-pentapeptide (lipid intermediate I) to form undecaprenyl-pyrophosphoryl-MurNAc-(pentapeptide)GlcNAc (lipid intermediate II). This Burkholderia multivorans (strain ATCC 17616 / 249) protein is UDP-N-acetylglucosamine--N-acetylmuramyl-(pentapeptide) pyrophosphoryl-undecaprenol N-acetylglucosamine transferase.